The following is a 337-amino-acid chain: Large ribosomal subunit protein uL3 (337 aa).

The protein belongs to the universal ribosomal protein uL3 family. As to quaternary structure, part of the 50S ribosomal subunit. Forms a cluster with proteins L14 and L24e.

One of the primary rRNA binding proteins, it binds directly near the 3'-end of the 23S rRNA, where it nucleates assembly of the 50S subunit. The sequence is that of Large ribosomal subunit protein uL3 from Methanosphaerula palustris (strain ATCC BAA-1556 / DSM 19958 / E1-9c).